The chain runs to 189 residues: Mercury resistance operon ORF3 (189 aa).

The segment at residues M1–A27 is a signal peptide (tat-type signal). The Thioredoxin domain occupies T38–A189.

Post-translationally, predicted to be exported by the Tat system. The position of the signal peptide cleavage has not been experimentally proven.

The protein resides in the secreted. Its function is as follows. Probable mercury binding protein. The protein is Mercury resistance operon ORF3 of Streptomyces lividans.